The sequence spans 369 residues: Peptide chain release factor 2 (369 aa).

The residue at position 250 (glutamine 250) is an N5-methylglutamine.

The protein belongs to the prokaryotic/mitochondrial release factor family. Post-translationally, methylated by PrmC. Methylation increases the termination efficiency of RF2.

The protein localises to the cytoplasm. Functionally, peptide chain release factor 2 directs the termination of translation in response to the peptide chain termination codons UGA and UAA. This Rickettsia typhi (strain ATCC VR-144 / Wilmington) protein is Peptide chain release factor 2 (prfB).